Consider the following 427-residue polypeptide: Cholecystokinin receptor type A (427 aa).

Residues 1 to 41 lie on the Extracellular side of the membrane; sequence MDAVASLLGNASGIPPPCELGLDNETLFCLDQPPPSKEWQP. 2 N-linked (GlcNAc...) asparagine glycosylation sites follow: Asn10 and Asn24. A disulfide bond links Cys18 and Cys29. The helical transmembrane segment at 42-67 threads the bilayer; that stretch reads AVQILLYSLIFLLSVLGNTLVITVLI. Residues 68–77 are Cytoplasmic-facing; that stretch reads RNKRMRTVTN. A helical transmembrane segment spans residues 78–104; it reads IFLLSLAISDLMLCLFCMPFNLIPNLL. Residues 105–115 lie on the Extracellular side of the membrane; it reads KDFIFGSALCK. A disulfide bridge links Cys114 with Cys196. The chain crosses the membrane as a helical span at residues 116–137; the sequence is TTTYLMGTSVSVSTLNLVAISL. Topologically, residues 138–157 are cytoplasmic; the sequence is ERYGAICKPLQSRVWQTKSH. Residues 158–178 traverse the membrane as a helical segment; sequence ALKVIAATWCLSFAIMTPYPI. The Extracellular segment spans residues 179–210; that stretch reads YSNLVPFTKTNNQTANMCRFLLPSDVMQQAWH. The N-linked (GlcNAc...) asparagine glycan is linked to Asn190. The chain crosses the membrane as a helical span at residues 211–234; it reads TFLLLILFLIPGIVMMVAYGMISL. Topologically, residues 235–312 are cytoplasmic; sequence ELYQGIKFDA…TLMAKKRVIR (78 aa). A helical membrane pass occupies residues 313 to 333; sequence MLMVIVVLFFLCWMPIFSANA. The Extracellular portion of the chain corresponds to 334 to 348; it reads WRAYDTVSAERRLSG. The chain crosses the membrane as a helical span at residues 349-372; the sequence is TPISFILLLSYTSSCVNPIIYCFM. Residues 373 to 427 lie on the Cytoplasmic side of the membrane; the sequence is NRRFRLGFMATFPCCPNPGPPGPRAEAGEEEEGRTTRASLSRYSYSHMSASAPPS. Cys386 is lipidated: S-palmitoyl cysteine. A disordered region spans residues 391–427; it reads GPPGPRAEAGEEEEGRTTRASLSRYSYSHMSASAPPS. The span at 411–421 shows a compositional bias: polar residues; it reads SLSRYSYSHMS.

This sequence belongs to the G-protein coupled receptor 1 family.

Its subcellular location is the cell membrane. Its function is as follows. Receptor for cholecystokinin. Mediates pancreatic growth and enzyme secretion, smooth muscle contraction of the gall bladder and stomach. Has a 1000-fold higher affinity for CCK rather than for gastrin. It modulates feeding and dopamine-induced behavior in the central and peripheral nervous system. This receptor mediates its action by association with G proteins that activate a phosphatidylinositol-calcium second messenger system. This chain is Cholecystokinin receptor type A (CCKAR), found in Oryctolagus cuniculus (Rabbit).